A 992-amino-acid polypeptide reads, in one-letter code: Ankyrin repeat domain-containing protein 18A (992 aa).

ANK repeat units follow at residues 67–96, 100–129, 133–162, 166–195, and 199–228; these read KDRTVLHLACAHGRVQVVTLLLHRRCQIDI, LNRTPLMKAVHSQEEACAIVLLECGANPNI, YGNTALHYAVYNKGTSLAERLLSHHANIEA, EGNTPLLFAINSRRQHMVEFLLKNQANIHA, and FKRTALILAVQHNLSSIVTLLLQQNIRISS. The segment at 262 to 320 is disordered; the sequence is NHLRNDNQETAAMKPANLKKRKERAKAEHNLKVASEEKQERLQRSENKQPQDSQSYGKK. Coiled coils occupy residues 278-310, 378-618, 683-713, and 743-899; these read NLKKRKERAKAEHNLKVASEEKQERLQRSENKQ, KMIT…AERE, ISLLNYTADQIRKKNRELEEEATGYKKCLEM, and FKKL…EAFA. Residues 286–310 show a composition bias toward basic and acidic residues; the sequence is AKAEHNLKVASEEKQERLQRSENKQ.

This is Ankyrin repeat domain-containing protein 18A (ANKRD18A) from Homo sapiens (Human).